The chain runs to 647 residues: 1-deoxy-D-xylulose-5-phosphate synthase (647 aa).

Residues histidine 72 and 113-115 (GHA) each bind thiamine diphosphate. Aspartate 144 is a Mg(2+) binding site. Residues 145–146 (GA), asparagine 174, tyrosine 287, and glutamate 370 contribute to the thiamine diphosphate site. Asparagine 174 serves as a coordination point for Mg(2+).

It belongs to the transketolase family. DXPS subfamily. Homodimer. Requires Mg(2+) as cofactor. The cofactor is thiamine diphosphate.

The catalysed reaction is D-glyceraldehyde 3-phosphate + pyruvate + H(+) = 1-deoxy-D-xylulose 5-phosphate + CO2. It participates in metabolic intermediate biosynthesis; 1-deoxy-D-xylulose 5-phosphate biosynthesis; 1-deoxy-D-xylulose 5-phosphate from D-glyceraldehyde 3-phosphate and pyruvate: step 1/1. Its function is as follows. Catalyzes the acyloin condensation reaction between C atoms 2 and 3 of pyruvate and glyceraldehyde 3-phosphate to yield 1-deoxy-D-xylulose-5-phosphate (DXP). The polypeptide is 1-deoxy-D-xylulose-5-phosphate synthase (Synechococcus sp. (strain WH7803)).